A 628-amino-acid polypeptide reads, in one-letter code: Somatic embryogenesis receptor kinase 2 (628 aa).

An N-terminal signal peptide occupies residues 1–29; that stretch reads MGRKKFEAFGFVCLISLLLLFNSLWLASS. Over 30–241 the chain is Extracellular; it reads NMEGDALHSL…PTPGGYSATG (212 aa). Positions 45–85 are PSKR1 binding; sequence DPNNVLQSWDPTLVNPCTWFHVTCNNENSVIRVDLGNADLS. The interval 56–58 is CLE44 binding; sequence TLV. A disulfide bridge connects residues cysteine 61 and cysteine 68. Leucine-rich repeat receptor-like protein kinase binding stretches follow at residues 62–81 and 100–105; these read TWFH…DLGN and YLELYS. A brassinolide-binding site is contributed by 64–65; sequence FH. LRR repeat units follow at residues 95-119, 121-143, 144-167, and 168-192; these read LKNL…LGNL, NLVS…LGKL, FKLR…LTNI, and MTLQ…SFSL. Asparagine 107 and asparagine 118 each carry an N-linked (GlcNAc...) asparagine glycan. Leucine-rich repeat receptor-like protein kinase binding stretches follow at residues 126–129 and 148–150; these read DLYL and FLR. N-linked (GlcNAc...) asparagine glycosylation is found at asparagine 153 and asparagine 187. Residues 174-197 form a leucine-rich repeat receptor-like protein kinase binding region; it reads DLSNNRLSGSVPDNGSFSLFTPIS. A disulfide bridge links cysteine 205 with cysteine 213. A helical membrane pass occupies residues 242 to 262; the sequence is AIAGGVAAGAALLFAAPALAF. Over 263 to 628 the chain is Cytoplasmic; the sequence is AWWRRRKPQE…LHAMELSGPR (366 aa). Threonine 302 is modified (phosphothreonine). The region spanning 305–592 is the Protein kinase domain; sequence FSNKNILGRG…GLAEKWDEWQ (288 aa). Residue 311–319 coordinates ATP; sequence LGRGGFGKV. The residue at position 328 (threonine 328) is a Phosphothreonine. Lysine 333 contributes to the ATP binding site. Phosphoserine is present on residues serine 386 and serine 389. The active-site Proton acceptor is aspartate 432. Threonine 462, threonine 465, threonine 466, and threonine 471 each carry phosphothreonine. At tyrosine 479 the chain carries Phosphotyrosine. The residue at position 481 (serine 481) is a Phosphoserine. Residue threonine 482 is modified to Phosphothreonine. Serine 486 is modified (phosphoserine). Threonine 562 is modified (phosphothreonine). Serine 604 is subject to Phosphoserine. Threonine 616 is modified (phosphothreonine). Serine 625 carries the post-translational modification Phosphoserine.

The protein belongs to the protein kinase superfamily. Ser/Thr protein kinase family. In terms of assembly, homo- and heterodimer. Component of the SERK1 signaling complex, composed of KAPP, CDC48A, GRF6 or GRF7, SERK1, SERK2, SERK3/BAK1 and BRI1. Bind to BRI1 in a brassinolide-dependent manner. Heterodimer with PSKR1. Interacts with the EF-Tu receptor EFR and FLS2 in a specific ligand-induced manner. Interacts with ERECTA in a EPF2-induced manner. Interacts with ERL1 in a EPF1-induced manner. Interacts with TMM. In the presence of the signal peptide RGF1, interacts with RGI3/RGFR1 and RGI4/RGFR2/SKM2. Binds to the peptide CLE44 in the presence of TDR. In terms of processing, autophosphorylated. In terms of tissue distribution, expressed in flowers, tapetum, developing microspores, all cells of the embryo sac, provascular strands and developing vascular bundles. Low expression in adult vascular tissue.

It is found in the cell membrane. The enzyme catalyses L-seryl-[protein] + ATP = O-phospho-L-seryl-[protein] + ADP + H(+). It carries out the reaction L-threonyl-[protein] + ATP = O-phospho-L-threonyl-[protein] + ADP + H(+). In terms of biological role, serine/threonine-kinase involved in brassinosteroid-dependent and -independent signaling pathways. Acts redundantly with SERK1 as a control point for sporophytic development controlling male gametophyte production. Serves as coreceptor to small peptide (e.g. RGF1 and CLE44) signaling. Involved in the perception of phytosulfokine and subsequent signal transduction. This is Somatic embryogenesis receptor kinase 2 from Arabidopsis thaliana (Mouse-ear cress).